Here is a 137-residue protein sequence, read N- to C-terminus: Putative pre-16S rRNA nuclease (137 aa).

The protein belongs to the YqgF nuclease family.

Its subcellular location is the cytoplasm. Its function is as follows. Could be a nuclease involved in processing of the 5'-end of pre-16S rRNA. The protein is Putative pre-16S rRNA nuclease of Chromobacterium violaceum (strain ATCC 12472 / DSM 30191 / JCM 1249 / CCUG 213 / NBRC 12614 / NCIMB 9131 / NCTC 9757 / MK).